Reading from the N-terminus, the 359-residue chain is MDPLGPAKPQWSWRCCLTTLLFQLLMAVCFFSYLRVSQDDPTVYPNGSRFPDSTGTPAHSIPLILLWTWPFNKPIALPRCSEMVPGTADCNITADRKVYPQADAVIVHHREVMYNPSAQLPRSPRRQGQRWIWFSMESPSHCWQLKAMDGYFNLTMSYRSDSDIFTPYGWLEPWSGQPAHPPLNLSAKTELVAWAVSNWGPNSARVRYYQSLQAHLKVDVYGRSHKPLPQGTMMETLSRYKFYLAFENSLHPDYITEKLWRNALEAWAVPVVLGPSRSNYERFLPPDAFIHVDDFQSPKDLARYLQELDKDHARYLSYFRWRETLRPRSFSWALAFCKACWKLQEESRYQTRGIAAWFT.

The Cytoplasmic segment spans residues Met-1–Arg-14. The chain crosses the membrane as a helical; Signal-anchor for type II membrane protein span at residues Cys-15–Leu-34. The Lumenal portion of the chain corresponds to Arg-35–Thr-359. 4 N-linked (GlcNAc...) asparagine glycosylation sites follow: Asn-46, Asn-91, Asn-153, and Asn-184. Positions Lys-73 to Val-112 are determines site-specific fucosylation.

The protein belongs to the glycosyltransferase 10 family. Homodimer and monomer. Monomer (secreted form). In terms of processing, N-glycosylated. Post-translationally, proteolytic cleavage releases a secreted glycoform of 43 kDa. As to expression, kidney, liver, colon, small intestine, bladder, uterus and salivary gland.

It is found in the golgi apparatus. The protein resides in the golgi stack membrane. The protein localises to the secreted. It catalyses the reaction a beta-D-galactosyl-(1-&gt;4)-N-acetyl-beta-D-glucosaminyl derivative + GDP-beta-L-fucose = a beta-D-galactosyl-(1-&gt;4)-[alpha-L-fucosyl-(1-&gt;3)]-N-acetyl-beta-D-glucosaminyl derivative + GDP + H(+). The enzyme catalyses an N-acetyl-alpha-neuraminyl-(2-&gt;3)-beta-D-galactosyl-(1-&gt;4)-N-acetyl-beta-D-glucosaminyl derivative + GDP-beta-L-fucose = an alpha-Neu5Ac-(2-&gt;3)-beta-D-Gal-(1-&gt;4)-[alpha-L-Fuc-(1-&gt;3)]-beta-D-GlcNAc derivative + GDP + H(+). The catalysed reaction is an alpha-Neu5Ac-(2-&gt;3)-beta-D-Gal-(1-&gt;4)-beta-D-GlcNAc-(1-&gt;3)-beta-D-Gal-(1-&gt;4)-[alpha-L-Fuc-(1-&gt;3)]-beta-D-GlcNAc derivative + GDP-beta-L-fucose = an alpha-Neu5Ac-(2-&gt;3)-beta-D-Gal-(1-&gt;4)-[alpha-L-Fuc-(1-&gt;3)]-beta-D-GlcNAc-(1-&gt;3)-beta-D-Gal-(1-&gt;4)-[alpha-L-Fuc-(1-&gt;3)]-beta-D-GlcNAc derivative + GDP + H(+). It carries out the reaction a neolactoside nLc6Cer + GDP-beta-L-fucose = beta-D-Gal-(1-&gt;4)-[alpha-L-Fuc-(1-&gt;3)]-beta-D-GlcNAc-(1-&gt;3)-beta-D-Gal-(1-&gt;4)-beta-D-GlcNAc-(1-&gt;3)-beta-D-Gal-(1-&gt;4)-beta-D-Glc-(1&lt;-&gt;1')-Cer + GDP + H(+). It catalyses the reaction a neolactoside nLc6Cer + GDP-beta-L-fucose = beta-D-galactosyl-(1-&gt;4)-N-acetyl-beta-D-glucosaminyl-(1-&gt;3)-beta-D-galactosyl-(1-&gt;4)-[alpha-L-fucosyl-(1-&gt;3)]-N-acetyl-beta-D-glucosaminyl-(1-&gt;3)-beta-D-galactosyl-(1-&gt;4)-beta-D-glucosyl-(1&lt;-&gt;1')-ceramide + GDP + H(+). The enzyme catalyses a neolactoside VI(3)-alpha-NeuNAc-nLc6Cer + GDP-beta-L-fucose = a neolactoside VI(3)-alpha-NeuAc,V(3)-alphaFuc-nLc6Cer + GDP + H(+). The catalysed reaction is beta-D-galactosyl-(1-&gt;4)-N-acetyl-D-glucosamine + GDP-beta-L-fucose = beta-D-galactosyl-(1-&gt;4)-[alpha-L-fucosyl-(1-&gt;3)]-N-acetyl-D-glucosamine + GDP + H(+). It carries out the reaction N-acetyl-alpha-neuraminosyl-(2-&gt;3)-beta-D-galactosyl-(1-&gt;4)-N-acetyl-beta-D-glucosamine + GDP-beta-L-fucose = N-acetyl-alpha-neuraminosyl-(2-&gt;3)-beta-D-galactosyl-(1-&gt;4)-[alpha-L-fucosyl-(1-&gt;3)]-N-acetyl-beta-D-glucosamine + GDP + H(+). It catalyses the reaction lactose + GDP-beta-L-fucose = beta-D-galactosyl-(1-&gt;4)-[alpha-L-fucosyl-(1-&gt;3)]-D-glucose + GDP + H(+). The enzyme catalyses alpha-L-Fuc-(1-&gt;2)-beta-D-Gal-(1-&gt;4)-D-Glc + GDP-beta-L-fucose = alpha-L-Fuc-(1-&gt;2)-beta-D-Gal-(1-&gt;4)-[alpha-L-Fuc-(1-&gt;3)]-D-Glc + GDP + H(+). The catalysed reaction is a beta-D-galactosyl-(1-&gt;4)-N-acetyl-beta-D-6-sulfooxy-glucosaminyl derivative + GDP-beta-L-fucose = a beta-D-galactosyl-(1-&gt;4)-[alpha-L-fucosyl-(1-&gt;3)]-N-acetyl-beta-D-6-sulfooxy-glucosaminyl derivative + GDP + H(+). It participates in protein modification; protein glycosylation. Its function is as follows. Catalyzes the transfer of L-fucose, from a guanosine diphosphate-beta-L-fucose, to the N-acetyl glucosamine (GlcNAc) of a distal alpha2,3 sialylated lactosamine unit of a glycoprotein- or a glycolipid-linked sialopolylactosamines chain or of a distal or internal lactosamine unit of a neutral glycoprotein- or a glycolipid-linked polylactosamines chain through an alpha-1,3 glycosidic linkage and participates in surface expression of the sialyl Lewis X (sLe(x)), Lewis X (Le(x)) and non sialylated VIM2 determinants. Moreover transfers fucose to H-type 2 (Fucalpha1-2Galbeta1-4GlcNAc) chain acceptor substrates and participates in difucosylated sialyl Lewis x determinants. Also fucosylates a polylactosamine substrate having a 6 sulfate modification at the GlcNAc moiety and gives rise to sialyl and non-sialyl 6-sulfo lewis X. Does not have activity towards type 1 ((Galbeta1-3GlcNAc)) and H-type 1 chain (Fucalpha1-2Galbeta1-3GlcNAc) acceptors substrates. Functionally, does not have alpha(1,3)-fucosyltransferase activity. The sequence is that of 4-galactosyl-N-acetylglucosaminide 3-alpha-L-fucosyltransferase FUT6 from Homo sapiens (Human).